A 257-amino-acid chain; its full sequence is Glucanase inhibitor protein 1 (257 aa).

The N-terminal stretch at 1 to 28 (MKVFPALTSALVALGTAGVEAEHVQRSL) is a signal peptide. In terms of domain architecture, Peptidase S1 spans 29–256 (VMGGGTVPVG…GLEWINSVIK (228 aa)). Cysteines 56 and 72 form a disulfide. N-linked (GlcNAc...) asparagine glycosylation is found at asparagine 107 and asparagine 180. Cystine bridges form between cysteine 181–cysteine 191 and cysteine 201–cysteine 232. A glycan (N-linked (GlcNAc...) asparagine) is linked at asparagine 213.

Belongs to the peptidase S1 family. Interacts with host endoglucanases EGaseA.

The protein resides in the secreted. Its function is as follows. Secreted effector that suppresses host plant glucan elicitor-mediated defense responses. Targets host endoglucanase EGaseA and inhibits the EGaseA-mediated release of elicitor-active glucan oligosaccharides from P.sojae cell walls. This chain is Glucanase inhibitor protein 1, found in Phytophthora sojae (Soybean stem and root rot agent).